A 442-amino-acid chain; its full sequence is Protein translocase subunit SecY (442 aa).

The next 10 membrane-spanning stretches (helical) occupy residues 24–44, 76–96, 125–145, 149–169, 178–198, 212–232, 269–289, 312–332, 363–383, and 385–405; these read FLFL…PGIN, IFAL…LMTA, VLAL…GVAF, FGFY…MMWL, VGNG…PRAI, IFAL…VVFI, VIPA…GSWF, NILL…ALMF, GVLT…CLLP, and FLVV…LIVV.

The protein belongs to the SecY/SEC61-alpha family. As to quaternary structure, component of the Sec protein translocase complex. Heterotrimer consisting of SecY, SecE and SecG subunits. The heterotrimers can form oligomers, although 1 heterotrimer is thought to be able to translocate proteins. Interacts with the ribosome. Interacts with SecDF, and other proteins may be involved. Interacts with SecA.

Its subcellular location is the cell inner membrane. In terms of biological role, the central subunit of the protein translocation channel SecYEG. Consists of two halves formed by TMs 1-5 and 6-10. These two domains form a lateral gate at the front which open onto the bilayer between TMs 2 and 7, and are clamped together by SecE at the back. The channel is closed by both a pore ring composed of hydrophobic SecY resides and a short helix (helix 2A) on the extracellular side of the membrane which forms a plug. The plug probably moves laterally to allow the channel to open. The ring and the pore may move independently. This is Protein translocase subunit SecY from Pseudomonas aeruginosa (strain ATCC 15692 / DSM 22644 / CIP 104116 / JCM 14847 / LMG 12228 / 1C / PRS 101 / PAO1).